A 367-amino-acid chain; its full sequence is S-adenosylmethionine:tRNA ribosyltransferase-isomerase (367 aa).

A disordered region spans residues 150–182; it reads RHGEEEESSDEAISSQNPEIATESKRTPSNDDK. The span at 171–182 shows a compositional bias: basic and acidic residues; sequence TESKRTPSNDDK.

It belongs to the QueA family. As to quaternary structure, monomer.

The protein resides in the cytoplasm. The catalysed reaction is 7-aminomethyl-7-carbaguanosine(34) in tRNA + S-adenosyl-L-methionine = epoxyqueuosine(34) in tRNA + adenine + L-methionine + 2 H(+). It participates in tRNA modification; tRNA-queuosine biosynthesis. In terms of biological role, transfers and isomerizes the ribose moiety from AdoMet to the 7-aminomethyl group of 7-deazaguanine (preQ1-tRNA) to give epoxyqueuosine (oQ-tRNA). This chain is S-adenosylmethionine:tRNA ribosyltransferase-isomerase, found in Rickettsia felis (strain ATCC VR-1525 / URRWXCal2) (Rickettsia azadi).